The following is an 853-amino-acid chain: ATP-dependent zinc metalloprotease FtsH (853 aa).

The Cytoplasmic portion of the chain corresponds to 1 to 5; the sequence is MKNKK. Residues 6 to 26 traverse the membrane as a helical segment; sequence YLQFGGIAAVILIVLFLVSLF. Topologically, residues 27 to 113 are extracellular; sequence SSDTRNFQEV…SYTTNVTQES (87 aa). A helical membrane pass occupies residues 114–134; sequence FLMSMLSFILPMVIIFGLLMF. The Cytoplasmic segment spans residues 135 to 853; sequence FLTRMQGGGM…NPENEGDNRG (719 aa). 205–212 is a binding site for ATP; sequence GPPGTGKT. Histidine 427 contacts Zn(2+). Residue glutamate 428 is part of the active site. The Zn(2+) site is built by histidine 431 and aspartate 503. Basic and acidic residues-rich tracts occupy residues 619 to 632 and 639 to 648; these read ESTR…REPV and ALERGEEPPK. Residues 619–853 form a disordered region; sequence ESTRFPRQEN…NPENEGDNRG (235 aa). Positions 677 to 695 are enriched in low complexity; the sequence is PASSAGVAPAAGAAAGSYG. Composition is skewed to polar residues over residues 728 to 739 and 770 to 788; these read TPAQAPEQSPDS and MDQS…QESP. The span at 796-813 shows a compositional bias: basic and acidic residues; that stretch reads LPDHERSDYPEKAQKESV.

It in the central section; belongs to the AAA ATPase family. The protein in the C-terminal section; belongs to the peptidase M41 family. Homohexamer. Zn(2+) serves as cofactor.

The protein localises to the cell membrane. Its function is as follows. Acts as a processive, ATP-dependent zinc metallopeptidase for both cytoplasmic and membrane proteins. Plays a role in the quality control of integral membrane proteins. The polypeptide is ATP-dependent zinc metalloprotease FtsH (Corynebacterium glutamicum (strain ATCC 13032 / DSM 20300 / JCM 1318 / BCRC 11384 / CCUG 27702 / LMG 3730 / NBRC 12168 / NCIMB 10025 / NRRL B-2784 / 534)).